A 151-amino-acid chain; its full sequence is Small ribosomal subunit protein uS15 (151 aa).

It belongs to the universal ribosomal protein uS15 family.

The polypeptide is Small ribosomal subunit protein uS15 (RPS13) (Candida maltosa (Yeast)).